The following is a 204-amino-acid chain: Ribonuclease HII (204 aa).

One can recognise an RNase H type-2 domain in the interval 8–197; the sequence is RLICGVDEAG…VRELLQNPPL (190 aa). A divalent metal cation is bound by residues D14, E15, and D106.

It belongs to the RNase HII family. Requires Mn(2+) as cofactor. Mg(2+) serves as cofactor.

Its subcellular location is the cytoplasm. It carries out the reaction Endonucleolytic cleavage to 5'-phosphomonoester.. Its function is as follows. Endonuclease that specifically degrades the RNA of RNA-DNA hybrids. This chain is Ribonuclease HII, found in Azoarcus sp. (strain BH72).